The sequence spans 65 residues: Large ribosomal subunit protein bL35 (65 aa).

Belongs to the bacterial ribosomal protein bL35 family.

The sequence is that of Large ribosomal subunit protein bL35 from Thermotoga maritima (strain ATCC 43589 / DSM 3109 / JCM 10099 / NBRC 100826 / MSB8).